The sequence spans 698 residues: Elongation factor G 1 (698 aa).

Positions 8 to 290 (ERYRNIGICA…AVVEFLPAPV (283 aa)) constitute a tr-type G domain. Residues 17–24 (AHVDAGKT), 88–92 (DTPGH), and 142–145 (NKMD) each bind GTP.

It belongs to the TRAFAC class translation factor GTPase superfamily. Classic translation factor GTPase family. EF-G/EF-2 subfamily.

The protein resides in the cytoplasm. Functionally, catalyzes the GTP-dependent ribosomal translocation step during translation elongation. During this step, the ribosome changes from the pre-translocational (PRE) to the post-translocational (POST) state as the newly formed A-site-bound peptidyl-tRNA and P-site-bound deacylated tRNA move to the P and E sites, respectively. Catalyzes the coordinated movement of the two tRNA molecules, the mRNA and conformational changes in the ribosome. The sequence is that of Elongation factor G 1 from Shewanella oneidensis (strain ATCC 700550 / JCM 31522 / CIP 106686 / LMG 19005 / NCIMB 14063 / MR-1).